Here is a 184-residue protein sequence, read N- to C-terminus: Protein Syd (184 aa).

Belongs to the Syd family.

It is found in the cell inner membrane. Interacts with the SecY protein in vivo. May bind preferentially to an uncomplexed state of SecY, thus functioning either as a chelating agent for excess SecY in the cell or as a regulatory factor that negatively controls the translocase function. The protein is Protein Syd of Photorhabdus laumondii subsp. laumondii (strain DSM 15139 / CIP 105565 / TT01) (Photorhabdus luminescens subsp. laumondii).